We begin with the raw amino-acid sequence, 335 residues long: E3 ubiquitin-protein ligase NLA (335 aa).

In terms of domain architecture, SPX spans 1-154; the sequence is MKFCKKYEEY…ESRQGQAFKT (154 aa). Residues 231 to 280 form an RING-type zinc finger; the sequence is CSICLDTVFDPISLTCGHIYCYMCACSAASVNVVDGLKTAEATEKCPLCR.

In terms of assembly, interacts with UBC8. Interacts with PHT1-1 and PHT1-4. Forms homodimers (via RING domain). Interacts with UBC24/PHO2. Interacts with NPF2.13/NRT1.7. Interacts with NAC92/ORE1. High expression in roots and stems, medium in seedlings, flowers, rosette and cauline leaves, and very low in siliques. Detected in cotyledons, hypocotyls, pedicel, receptacle, pistil, sepal, filament of stamen and at the two ends of developing siliques.

The protein resides in the nucleus speckle. Its subcellular location is the nucleus. The protein localises to the cell membrane. The enzyme catalyses S-ubiquitinyl-[E2 ubiquitin-conjugating enzyme]-L-cysteine + [acceptor protein]-L-lysine = [E2 ubiquitin-conjugating enzyme]-L-cysteine + N(6)-ubiquitinyl-[acceptor protein]-L-lysine.. It participates in protein modification; protein ubiquitination. In terms of biological role, E3 ubiquitin-protein ligase that mediates E2-dependent protein ubiquitination. Plays a role in salicylic acid-mediated negative feedback regulation of salicylic acid (SA) accumulation. May be involved in the overall regulation of SA, benzoic acid and phenylpropanoid biosynthesis. Involved in defense response. May act as negative regulator of resistance to the necrotrophic fungal pathogen Plectosphaerella cucumerina by modulating the accumulation of the phytoalexin camalexin and the salicylic acid- and jasmonate- dependent defense pathways. Controls the adaptability to nitrogen limitation by channeling the phenylpropanoid metabolic flux to the induced anthocyanin synthesis. Involved in the regulation of inorganic phosphate (Pi) homeostasis in a nitrate-dependent fashion. Directs the ubiquitination and subsequent degradation of the plasma membrane-localized inorganic phosphate transporters PHT1-1 and PHT1-4, to maintain phosphate homeostasis. The ubiquitination of PHTs triggers their clathrin-dependent endocytosis and trafficking to the vacuole through the endosomal pathway for degradation. Functions cooperatively with UBC24/PHO2 to regulate the abundance of PHT1-1, PHT1-2 and PHT1-3 in different subcellular compartments. Regulates Pi homeostasis by mediating, cooperatively with UBC24/PHO2, polyubiquitination of PHT1-4 and its targeting for degradation. Directs the polyubiquitination and subsequent degradation of the plasma membrane-localized nitrate transporter NPF2.13/NRT1.7, to help plants to adapt to nitrogen deficiency by regulating the source-to-sink remobilization of nitrate. Regulates leaf senescence during nitrogen deficiency by mediating, cooperatively with UBC24/PHO2, polyubiquitination of NAC92/ORE1 and its targeting for degradation. The chain is E3 ubiquitin-protein ligase NLA from Arabidopsis thaliana (Mouse-ear cress).